A 142-amino-acid chain; its full sequence is UPF0102 protein Synpcc7942_0312 (142 aa).

The protein belongs to the UPF0102 family.

The sequence is that of UPF0102 protein Synpcc7942_0312 from Synechococcus elongatus (strain ATCC 33912 / PCC 7942 / FACHB-805) (Anacystis nidulans R2).